Here is a 350-residue protein sequence, read N- to C-terminus: Arginine N-succinyltransferase (350 aa).

Residue Leu-125 participates in succinyl-CoA binding. His-229 functions as the Proton donor in the catalytic mechanism.

The protein belongs to the arginine N-succinyltransferase family.

The enzyme catalyses succinyl-CoA + L-arginine = N(2)-succinyl-L-arginine + CoA + H(+). Its pathway is amino-acid degradation; L-arginine degradation via AST pathway; L-glutamate and succinate from L-arginine: step 1/5. In terms of biological role, catalyzes the transfer of succinyl-CoA to arginine to produce N(2)-succinylarginine. The chain is Arginine N-succinyltransferase from Yersinia pestis.